Consider the following 368-residue polypeptide: Glutamine synthetase root isozyme 2 (368 aa).

The 81-residue stretch at 19 to 99 (IIAEYIWVGG…VMCDCYEPNG (81 aa)) folds into the GS beta-grasp domain. The tract at residues 38–66 (RTLSGPVDDPSKLPKWNFDGSSTGQAPGD) is disordered. The region spanning 106 to 368 (KRHGAAKIFS…NGDGKGAAAP (263 aa)) is the GS catalytic domain.

This sequence belongs to the glutamine synthetase family. In terms of assembly, homooctamer. As to expression, found mainly in the vascular tissues of seedling roots.

It is found in the cytoplasm. It carries out the reaction L-glutamate + NH4(+) + ATP = L-glutamine + ADP + phosphate + H(+). In terms of biological role, plays a role in the flow of nitrogen into nitrogenous organic compounds. In Zea mays (Maize), this protein is Glutamine synthetase root isozyme 2 (GLN2).